A 335-amino-acid polypeptide reads, in one-letter code: Hsp90 co-chaperone Cdc37-like 1 (335 aa).

Residues M1–W11 show a composition bias toward pro residues. Positions M1–G42 are disordered. The segment at E2 to M170 is self-association. Positions D27 to D40 are enriched in low complexity. Phosphoserine is present on residues S32 and S88. The stretch at H84 to R120 forms a coiled coil. The tract at residues K147–Q276 is self-association and interaction with Hsp90. The interaction with Hsp70 stretch occupies residues K266–V335. The tract at residues S277–V335 is required for interaction with STIP1.

It belongs to the CDC37 family. In terms of assembly, self-associates. Forms complexes with Hsp70 and Hsp90. Interacts with CDC37, FKBP4, PPID and STIP1.

Its subcellular location is the cytoplasm. In terms of biological role, co-chaperone that binds to numerous proteins and promotes their interaction with Hsp70 and Hsp90. The chain is Hsp90 co-chaperone Cdc37-like 1 (Cdc37l1) from Rattus norvegicus (Rat).